Reading from the N-terminus, the 160-residue chain is Peptide methionine sulfoxide reductase MsrA (160 aa).

Residue Cys11 is part of the active site.

It belongs to the MsrA Met sulfoxide reductase family.

The catalysed reaction is L-methionyl-[protein] + [thioredoxin]-disulfide + H2O = L-methionyl-(S)-S-oxide-[protein] + [thioredoxin]-dithiol. It carries out the reaction [thioredoxin]-disulfide + L-methionine + H2O = L-methionine (S)-S-oxide + [thioredoxin]-dithiol. Has an important function as a repair enzyme for proteins that have been inactivated by oxidation. Catalyzes the reversible oxidation-reduction of methionine sulfoxide in proteins to methionine. The polypeptide is Peptide methionine sulfoxide reductase MsrA (Malacoplasma penetrans (strain HF-2) (Mycoplasma penetrans)).